Reading from the N-terminus, the 191-residue chain is 2-amino-4-hydroxy-6-hydroxymethyldihydropteridine pyrophosphokinase (191 aa).

This sequence belongs to the HPPK family.

It catalyses the reaction 6-hydroxymethyl-7,8-dihydropterin + ATP = (7,8-dihydropterin-6-yl)methyl diphosphate + AMP + H(+). It participates in cofactor biosynthesis; tetrahydrofolate biosynthesis; 2-amino-4-hydroxy-6-hydroxymethyl-7,8-dihydropteridine diphosphate from 7,8-dihydroneopterin triphosphate: step 4/4. In terms of biological role, catalyzes the transfer of pyrophosphate from adenosine triphosphate (ATP) to 6-hydroxymethyl-7,8-dihydropterin, an enzymatic step in folate biosynthesis pathway. This chain is 2-amino-4-hydroxy-6-hydroxymethyldihydropteridine pyrophosphokinase (folK), found in Mycobacterium leprae (strain TN).